The chain runs to 340 residues: Acidic endochitinase WIN6 (340 aa).

The first 22 residues, 1–22 (MSVWALFAFFSLFLSLSVRGSA), serve as a signal peptide directing secretion. One can recognise a Chitin-binding type-1 domain in the interval 23-63 (EQCGRQAGDALCPGGLCCSSYGWCGTTVDYCGIGCQSQCDG). 4 disulfides stabilise this stretch: C25/C40, C34/C46, C39/C53, and C57/C61. Residues 64-85 (GGGGDGGDDGCDGGDDGGGDGD) form a spacer region. Residues 86–340 (DGYLSDIIPK…YGLSGLKDTM (255 aa)) form a chitinase region. Cystine bridges form between C110-C172, C183-C191, and C290-C323. E154 functions as the Proton donor in the catalytic mechanism.

Belongs to the glycosyl hydrolase 19 family. Chitinase class I subfamily.

It catalyses the reaction Random endo-hydrolysis of N-acetyl-beta-D-glucosaminide (1-&gt;4)-beta-linkages in chitin and chitodextrins.. Its function is as follows. Defense against chitin-containing fungal pathogens. This chain is Acidic endochitinase WIN6 (WIN6), found in Populus trichocarpa (Western balsam poplar).